A 332-amino-acid polypeptide reads, in one-letter code: Transcription initiation factor IIB 2 (332 aa).

A compositionally biased stretch (polar residues) spans 1–10; the sequence is MSDTITTRTY. The tract at residues 1–36 is disordered; the sequence is MSDTITTRTYSADAKSRDVRPRESERDETQQDETQV. A compositionally biased stretch (basic and acidic residues) spans 14–29; that stretch reads AKSRDVRPRESERDET. Residues 33–63 form a TFIIB-type zinc finger; the sequence is ETQVCPECSGHLVTDEEHGETICEDCGLVVE. Positions 37, 40, 55, and 58 each coordinate Zn(2+). Positions 77-106 are disordered; sequence DSAERDSKSRVGAPTTKMMHDKGLSTNIGW. 2 consecutive repeat copies span residues 149 to 232 and 243 to 324.

The protein belongs to the TFIIB family.

Functionally, stabilizes TBP binding to an archaeal box-A promoter. Also responsible for recruiting RNA polymerase II to the pre-initiation complex (DNA-TBP-TFIIB). This Haloferax volcanii (strain ATCC 29605 / DSM 3757 / JCM 8879 / NBRC 14742 / NCIMB 2012 / VKM B-1768 / DS2) (Halobacterium volcanii) protein is Transcription initiation factor IIB 2.